The chain runs to 145 residues: Bacilliredoxin Acid345_1880 (145 aa).

Belongs to the bacilliredoxin family.

The chain is Bacilliredoxin Acid345_1880 from Koribacter versatilis (strain Ellin345).